We begin with the raw amino-acid sequence, 442 residues long: MSRRVVITGLGCVTPLGRSLSESWGNLLSSKNGLTPITSLPNYNEDYKLREKSIPSTITVGKIPENFQNENSAINKLLFTSQDERRTSSFIKLALRTTYEALHNAGLLNPNDITINTSLCNLDHFGCLIGSGIGSIQDIYQTSLQFHNDNKRINPYFVPKILTNMAAGNVSIKFNLRGLSHSVSTACATGNNSIGDAFNFIRLGMQDICVAGASETSLHPLSLAGFIRAKSITTNGISRPFDTQRSGFVLGEGCGMIVMESLEHAQKRNANIISELVGYGLSSDACHITSPPADGNGAKRAIEMALKMARLEPTDVDYVNAHATSTLLGDKAECLAVASALLPGRSKSKPLYISSNKGAIGHLLGAAGAVESIFTICSLKDDKMPHTLNLDNVLTLENNEADKLHFIRDKPIVGANPKYALCNSFGFGGVNTSLLFKKWEGS.

One can recognise a Ketosynthase family 3 (KS3) domain in the interval 2–438; sequence SRRVVITGLG…GVNTSLLFKK (437 aa). Catalysis depends on for beta-ketoacyl synthase activity residues Cys-187, His-322, and His-362.

The protein belongs to the thiolase-like superfamily. Beta-ketoacyl-ACP synthases family.

It localises to the mitochondrion. It carries out the reaction a fatty acyl-[ACP] + malonyl-[ACP] + H(+) = a 3-oxoacyl-[ACP] + holo-[ACP] + CO2. Functionally, possibly involved in the synthesis of a specialized molecule, probably related to a fatty acid, which is essential for mitochondrial respiration. Is essential for oxygen uptake and the presence of cytochromes A and B. The chain is 3-oxoacyl-[acyl-carrier-protein] synthase homolog (CEM1) from Saccharomyces cerevisiae (strain ATCC 204508 / S288c) (Baker's yeast).